Reading from the N-terminus, the 768-residue chain is Phosphoribosylformylglycinamidine synthase subunit PurL (768 aa).

The active site involves His44. ATP is bound by residues Tyr47 and Lys86. Glu88 contributes to the Mg(2+) binding site. Residues 89–92 (SHNH) and Arg111 each bind substrate. Residue His90 is the Proton acceptor of the active site. Residue Asp112 coordinates Mg(2+). Gln235 contacts substrate. Asp263 serves as a coordination point for Mg(2+). 307–309 (ESQ) lines the substrate pocket. 2 residues coordinate ATP: Asp518 and Gly555. Asn556 contacts Mg(2+). Residue Ser558 coordinates substrate.

This sequence belongs to the FGAMS family. As to quaternary structure, monomer. Part of the FGAM synthase complex composed of 1 PurL, 1 PurQ and 2 PurS subunits.

It is found in the cytoplasm. It catalyses the reaction N(2)-formyl-N(1)-(5-phospho-beta-D-ribosyl)glycinamide + L-glutamine + ATP + H2O = 2-formamido-N(1)-(5-O-phospho-beta-D-ribosyl)acetamidine + L-glutamate + ADP + phosphate + H(+). It participates in purine metabolism; IMP biosynthesis via de novo pathway; 5-amino-1-(5-phospho-D-ribosyl)imidazole from N(2)-formyl-N(1)-(5-phospho-D-ribosyl)glycinamide: step 1/2. Its function is as follows. Part of the phosphoribosylformylglycinamidine synthase complex involved in the purines biosynthetic pathway. Catalyzes the ATP-dependent conversion of formylglycinamide ribonucleotide (FGAR) and glutamine to yield formylglycinamidine ribonucleotide (FGAM) and glutamate. The FGAM synthase complex is composed of three subunits. PurQ produces an ammonia molecule by converting glutamine to glutamate. PurL transfers the ammonia molecule to FGAR to form FGAM in an ATP-dependent manner. PurS interacts with PurQ and PurL and is thought to assist in the transfer of the ammonia molecule from PurQ to PurL. The chain is Phosphoribosylformylglycinamidine synthase subunit PurL from Synechococcus sp. (strain JA-2-3B'a(2-13)) (Cyanobacteria bacterium Yellowstone B-Prime).